The primary structure comprises 296 residues: Cytidine deaminase (296 aa).

CMP/dCMP-type deaminase domains are found at residues 47-167 and 186-296; these read TEAE…FGPK and DSSD…VDPV. 88 to 90 lines the substrate pocket; the sequence is NLE. H101 provides a ligand contact to Zn(2+). Catalysis depends on E103, which acts as the Proton donor. Zn(2+) contacts are provided by C128 and C131.

The protein belongs to the cytidine and deoxycytidylate deaminase family. In terms of assembly, homodimer. Zn(2+) serves as cofactor.

It carries out the reaction cytidine + H2O + H(+) = uridine + NH4(+). The catalysed reaction is 2'-deoxycytidine + H2O + H(+) = 2'-deoxyuridine + NH4(+). In terms of biological role, this enzyme scavenges exogenous and endogenous cytidine and 2'-deoxycytidine for UMP synthesis. The protein is Cytidine deaminase of Shewanella sp. (strain W3-18-1).